A 495-amino-acid chain; its full sequence is uncharacterized protein (495 aa).

Residues D305–S317 show a composition bias toward low complexity. The disordered stretch occupies residues D305 to K404. A compositionally biased stretch (acidic residues) spans Y335–D347. Residues E348 to N363 show a composition bias toward low complexity. The span at S386–E398 shows a compositional bias: acidic residues.

This is an uncharacterized protein from Dictyostelium discoideum (Social amoeba).